We begin with the raw amino-acid sequence, 738 residues long: DNA topoisomerase 4 subunit A (738 aa).

Residues 32 to 496 (LPDVRDGLKP…SFEEVTLTNQ (465 aa)) enclose the Topo IIA-type catalytic domain. The O-(5'-phospho-DNA)-tyrosine intermediate role is filled by Y120.

The protein belongs to the type II topoisomerase GyrA/ParC subunit family. ParC type 1 subfamily. As to quaternary structure, heterotetramer composed of ParC and ParE.

The protein localises to the cell membrane. It carries out the reaction ATP-dependent breakage, passage and rejoining of double-stranded DNA.. Functionally, topoisomerase IV is essential for chromosome segregation. It relaxes supercoiled DNA. Performs the decatenation events required during the replication of a circular DNA molecule. The protein is DNA topoisomerase 4 subunit A of Rickettsia conorii (strain ATCC VR-613 / Malish 7).